Here is a 351-residue protein sequence, read N- to C-terminus: Phospho-N-acetylmuramoyl-pentapeptide-transferase (351 aa).

The next 10 membrane-spanning stretches (helical) occupy residues 17-37, 63-83, 85-105, 124-144, 158-178, 190-210, 230-250, 254-274, 279-299, and 328-348; these read TAYATIFAFLLALIFGPFIIL, IPTMGGILIFFCVLVSLFFWI, FWNIYFLIILFVMVSFACLGF, FKIYGQILFSCISVTMLYYFG, SLKLDLGVLYIPFGMFILISA, GLAIGLSIVVTGALVIIAYLA, LVVFLGALLGGSFGFLWFNAY, IMMGDTGSLSIGAVLGMTALI, ILFAILAGVFVVETLSVIIQV, and QVVIRFWIIGLIFAIIALSTL.

Belongs to the glycosyltransferase 4 family. MraY subfamily. Requires Mg(2+) as cofactor.

The protein resides in the cell inner membrane. It catalyses the reaction UDP-N-acetyl-alpha-D-muramoyl-L-alanyl-gamma-D-glutamyl-meso-2,6-diaminopimeloyl-D-alanyl-D-alanine + di-trans,octa-cis-undecaprenyl phosphate = di-trans,octa-cis-undecaprenyl diphospho-N-acetyl-alpha-D-muramoyl-L-alanyl-D-glutamyl-meso-2,6-diaminopimeloyl-D-alanyl-D-alanine + UMP. It functions in the pathway cell wall biogenesis; peptidoglycan biosynthesis. Functionally, catalyzes the initial step of the lipid cycle reactions in the biosynthesis of the cell wall peptidoglycan: transfers peptidoglycan precursor phospho-MurNAc-pentapeptide from UDP-MurNAc-pentapeptide onto the lipid carrier undecaprenyl phosphate, yielding undecaprenyl-pyrophosphoryl-MurNAc-pentapeptide, known as lipid I. The chain is Phospho-N-acetylmuramoyl-pentapeptide-transferase from Borrelia turicatae (strain 91E135).